Reading from the N-terminus, the 122-residue chain is Large ribosomal subunit protein uL14c (122 aa).

It belongs to the universal ribosomal protein uL14 family. As to quaternary structure, part of the 50S ribosomal subunit.

It is found in the plastid. Its subcellular location is the chloroplast. Functionally, binds to 23S rRNA. The sequence is that of Large ribosomal subunit protein uL14c from Angiopteris evecta (Mule's foot fern).